The sequence spans 960 residues: RNA polymerase II subunit A C-terminal domain phosphatase (960 aa).

Position 1 is an N-acetylmethionine (M1). In terms of domain architecture, FCP1 homology spans 178 to 341 (HRNRKLVLMV…PPAARETQAR (164 aa)). The disordered stretch occupies residues 331–580 (APPAARETQA…EEDTDDDDHL (250 aa)). Polar residues predominate over residues 439 to 448 (PGVQPTQGDA). Over residues 453–463 (LDFDLSSDSES) the composition is skewed to acidic residues. Phosphoserine is present on S530. The span at 547 to 556 (ESQNSEQSGV) shows a compositional bias: polar residues. Residues 566 to 578 (VGEEEEEDTDDDD) show a composition bias toward acidic residues. Positions 619–718 (LKSKVLADVA…DKVEEQLFPL (100 aa)) constitute a BRCT domain. S664 and S730 each carry phosphoserine. K770 carries the N6-acetyllysine modification. Disordered regions lie at residues 770 to 834 (KLIR…MSEA) and 854 to 948 (DILG…ADEM). A phosphoserine mark is found at S830, S860, and S863. Residues 854 to 864 (DILGEGSDDSD) show a composition bias toward acidic residues. The span at 865–881 (IEKKKPEDQDNEQERAP) shows a compositional bias: basic and acidic residues. Acidic residues predominate over residues 934–947 (SNDDEEGSSSEADE).

Homodimer. Interacts with GTF2F1. Interacts with WDR77, SNRPB and SNRNP70. Post-translationally, phosphorylated. In the presence of TFIIF, the phosphorylated form has an increased CTD phosphatase activity. The phosphorylation is required for the physical interaction with GTF2F1.

Its subcellular location is the nucleus. It is found in the cytoplasm. The protein localises to the cytoskeleton. The protein resides in the microtubule organizing center. It localises to the centrosome. Its subcellular location is the spindle. It is found in the spindle pole. The protein localises to the midbody. The enzyme catalyses O-phospho-L-seryl-[protein] + H2O = L-seryl-[protein] + phosphate. It carries out the reaction O-phospho-L-threonyl-[protein] + H2O = L-threonyl-[protein] + phosphate. Its function is as follows. Processively dephosphorylates 'Ser-2' and 'Ser-5' of the heptad repeats YSPTSPS in the C-terminal domain of the largest RNA polymerase II subunit. This promotes the activity of RNA polymerase II. Plays a role in the exit from mitosis by dephosphorylating crucial mitotic substrates (USP44, CDC20 and WEE1) that are required for M-phase-promoting factor (MPF)/CDK1 inactivation. The polypeptide is RNA polymerase II subunit A C-terminal domain phosphatase (Ctdp1) (Mus musculus (Mouse)).